The chain runs to 237 residues: Octanoyltransferase (237 aa).

Positions 27–210 (SGGDDILLLL…EFYHIFQPAG (184 aa)) constitute a BPL/LPL catalytic domain. Residues 72-79 (RGGNVTCH), 139-141 (SLG), and 152-154 (GMA) each bind substrate. The active-site Acyl-thioester intermediate is the Cys170.

Belongs to the LipB family.

It is found in the cytoplasm. The enzyme catalyses octanoyl-[ACP] + L-lysyl-[protein] = N(6)-octanoyl-L-lysyl-[protein] + holo-[ACP] + H(+). The protein operates within protein modification; protein lipoylation via endogenous pathway; protein N(6)-(lipoyl)lysine from octanoyl-[acyl-carrier-protein]: step 1/2. Its function is as follows. Catalyzes the transfer of endogenously produced octanoic acid from octanoyl-acyl-carrier-protein onto the lipoyl domains of lipoate-dependent enzymes. Lipoyl-ACP can also act as a substrate although octanoyl-ACP is likely to be the physiological substrate. The polypeptide is Octanoyltransferase (Desulfovibrio desulfuricans (strain ATCC 27774 / DSM 6949 / MB)).